Reading from the N-terminus, the 95-residue chain is Pyrimidine/purine nucleoside phosphorylase (95 aa).

This sequence belongs to the nucleoside phosphorylase PpnP family.

It carries out the reaction a purine D-ribonucleoside + phosphate = a purine nucleobase + alpha-D-ribose 1-phosphate. The catalysed reaction is adenosine + phosphate = alpha-D-ribose 1-phosphate + adenine. The enzyme catalyses cytidine + phosphate = cytosine + alpha-D-ribose 1-phosphate. It catalyses the reaction guanosine + phosphate = alpha-D-ribose 1-phosphate + guanine. It carries out the reaction inosine + phosphate = alpha-D-ribose 1-phosphate + hypoxanthine. The catalysed reaction is thymidine + phosphate = 2-deoxy-alpha-D-ribose 1-phosphate + thymine. The enzyme catalyses uridine + phosphate = alpha-D-ribose 1-phosphate + uracil. It catalyses the reaction xanthosine + phosphate = alpha-D-ribose 1-phosphate + xanthine. Functionally, catalyzes the phosphorolysis of diverse nucleosides, yielding D-ribose 1-phosphate and the respective free bases. Can use uridine, adenosine, guanosine, cytidine, thymidine, inosine and xanthosine as substrates. Also catalyzes the reverse reactions. In Yersinia pestis bv. Antiqua (strain Antiqua), this protein is Pyrimidine/purine nucleoside phosphorylase.